We begin with the raw amino-acid sequence, 165 residues long: Chorismate pyruvate-lyase (165 aa).

M35, R77, L115, and E156 together coordinate substrate.

It belongs to the UbiC family. As to quaternary structure, monomer.

The protein localises to the cytoplasm. The enzyme catalyses chorismate = 4-hydroxybenzoate + pyruvate. It participates in cofactor biosynthesis; ubiquinone biosynthesis. Removes the pyruvyl group from chorismate, with concomitant aromatization of the ring, to provide 4-hydroxybenzoate (4HB) for the ubiquinone pathway. The protein is Chorismate pyruvate-lyase of Escherichia coli O17:K52:H18 (strain UMN026 / ExPEC).